We begin with the raw amino-acid sequence, 595 residues long: Glutamyl-tRNA(Gln) amidotransferase subunit B, mitochondrial (595 aa).

The N-terminal 72 residues, 1 to 72 (MPRLWYSRYL…RAKSQSRNGR (72 aa)), are a transit peptide targeting the mitochondrion.

Belongs to the GatB/GatE family. GatB subfamily. In terms of assembly, subunit of the heterotrimeric GatCAB amidotransferase (AdT) complex, composed of A, B and C subunits.

The protein resides in the mitochondrion. The catalysed reaction is L-glutamyl-tRNA(Gln) + L-glutamine + ATP + H2O = L-glutaminyl-tRNA(Gln) + L-glutamate + ADP + phosphate + H(+). Its function is as follows. Allows the formation of correctly charged Gln-tRNA(Gln) through the transamidation of misacylated Glu-tRNA(Gln) in the mitochondria. The reaction takes place in the presence of glutamine and ATP through an activated gamma-phospho-Glu-tRNA(Gln). The sequence is that of Glutamyl-tRNA(Gln) amidotransferase subunit B, mitochondrial from Talaromyces marneffei (strain ATCC 18224 / CBS 334.59 / QM 7333) (Penicillium marneffei).